Consider the following 342-residue polypeptide: MSGFAKLKSWLYKASLFVSLILLIGFSVVLPIDSIAQASKSENNAFNTFIVVGALVVFGVFCIFIIIGRMLFHKSCLKDIPRRYIPITPADLPHRSSREAVLQNMERSKELTILLKKPKDPVIHDGLEPPRRCDYPLDEKLFPEYLNYADCIKSLTDRLKYHGLFLNNLDVRMNLEDTFADVVNSQFVNHNANKIQLEKAKEFIDLYETIRFSGKDVTRDQFIKFVKFCLYFGEVSLTRDTSFANLHNFRLNGSSNNIGRTESKYSINPFDENEYAQDDMHYFPEPPTHLVRESSISTVARHVSSGVDLTNSEEHPLDTDSDCNALRLKLSKADSYRSVIRH.

The Cytoplasmic segment spans residues 1–15; it reads MSGFAKLKSWLYKAS. A helical membrane pass occupies residues 16 to 36; the sequence is LFVSLILLIGFSVVLPIDSIA. Residues 37-47 lie on the Extracellular side of the membrane; that stretch reads QASKSENNAFN. Residues 48 to 68 form a helical membrane-spanning segment; sequence TFIVVGALVVFGVFCIFIIIG. Topologically, residues 69 to 342 are cytoplasmic; that stretch reads RMLFHKSCLK…ADSYRSVIRH (274 aa).

Belongs to the DLT1 family.

It is found in the membrane. Its function is as follows. Required for growth under high-pressure and low-temperature conditions. This chain is Defect at low temperature protein 1 (DLT1), found in Saccharomyces cerevisiae (strain RM11-1a) (Baker's yeast).